The chain runs to 227 residues: UPF0173 metal-dependent hydrolase Saci_1512 (227 aa).

This sequence belongs to the UPF0173 family.

This Sulfolobus acidocaldarius (strain ATCC 33909 / DSM 639 / JCM 8929 / NBRC 15157 / NCIMB 11770) protein is UPF0173 metal-dependent hydrolase Saci_1512.